Here is a 247-residue protein sequence, read N- to C-terminus: Uridylate kinase (247 aa).

14-17 (KLSG) is a binding site for ATP. The interval 22–27 (GERGVG) is involved in allosteric activation by GTP. Residue glycine 56 participates in UMP binding. ATP-binding residues include glycine 57 and arginine 61. Residues aspartate 76 and 137-144 (IGSPYFST) each bind UMP. 3 residues coordinate ATP: asparagine 165, tyrosine 171, and aspartate 174.

The protein belongs to the UMP kinase family. As to quaternary structure, homohexamer.

It localises to the cytoplasm. It catalyses the reaction UMP + ATP = UDP + ADP. It functions in the pathway pyrimidine metabolism; CTP biosynthesis via de novo pathway; UDP from UMP (UMPK route): step 1/1. With respect to regulation, allosterically activated by GTP. Inhibited by UTP, 5-bromo-UTP and 5-iodo-UTP. Catalyzes the reversible phosphorylation of UMP to UDP, with ATP as the most efficient phosphate donor. The chain is Uridylate kinase (pyrH) from Streptococcus pneumoniae serotype 4 (strain ATCC BAA-334 / TIGR4).